A 560-amino-acid chain; its full sequence is Membrane protein insertase YidC (560 aa).

Residues 1–21 (MDIKRTILIAALAVVSYVMVL) traverse the membrane as a helical segment. The interval 42-66 (VAPGLPDGVPAGNNGASADVPSANA) is disordered. A run of 5 helical transmembrane segments spans residues 341 to 361 (LELTVDYGFLWFIAQPIFWLL), 367 to 387 (LLGNWGWSIIVLTMLIKGLFF), 437 to 457 (LGGCLPILVQMPVFLALYWVL), 468 to 488 (WMLWITDLSIKDPFFILPIIM), and 515 to 535 (PIIFTFFFLWFPAGLVLYWVV).

Belongs to the OXA1/ALB3/YidC family. Type 1 subfamily. In terms of assembly, interacts with the Sec translocase complex via SecD. Specifically interacts with transmembrane segments of nascent integral membrane proteins during membrane integration.

It localises to the cell inner membrane. Required for the insertion and/or proper folding and/or complex formation of integral membrane proteins into the membrane. Involved in integration of membrane proteins that insert both dependently and independently of the Sec translocase complex, as well as at least some lipoproteins. Aids folding of multispanning membrane proteins. The sequence is that of Membrane protein insertase YidC from Pseudomonas putida (strain GB-1).